The following is a 36-amino-acid chain: Thrombin (36 aa).

The Peptidase S1 domain occupies 19-36 (IVKGIDAEVASAPMQVML).

This sequence belongs to the peptidase S1 family. As to quaternary structure, forms a heterodimer with SERPINA5. In terms of processing, the gamma-carboxyglutamyl residues, which bind calcium ions, result from the carboxylation of glutamyl residues by a microsomal enzyme, the vitamin K-dependent carboxylase. The modified residues are necessary for the calcium-dependent interaction with a negatively charged phospholipid surface, which is essential for the conversion of prothrombin to thrombin. Post-translationally, N-glycosylated. Expressed by the liver and secreted in plasma.

It is found in the secreted. The catalysed reaction is Selective cleavage of Arg-|-Gly bonds in fibrinogen to form fibrin and release fibrinopeptides A and B.. Inhibited by SERPINA5. Thrombin, which cleaves bonds after Arg and Lys, converts fibrinogen to fibrin and activates factors V, VII, VIII, XIII, and, in complex with thrombomodulin, protein C. Functions in blood homeostasis, inflammation and wound healing. The protein is Thrombin of Salmo salar (Atlantic salmon).